The chain runs to 240 residues: Regulatory protein SdiA (240 aa).

The HTH luxR-type domain occupies 173-238 (VMTPEMNFSK…QVACYAAATG (66 aa)). A DNA-binding region (H-T-H motif) is located at residues 197–216 (SAEIAMILSISENTVNFHQK).

Functionally, activates cell division by specifically increasing transcription from one of the two promoters that lie immediately upstream of the ftsQAZ gene cluster. Activates ydiV expression in response to extracellular autoinducer AI-1 (Vibrio fischeri autoinducer oxoC6). The chain is Regulatory protein SdiA (sdiA) from Escherichia coli (strain K12).